Here is a 410-residue protein sequence, read N- to C-terminus: Magnesium transporter NIPA3 (410 aa).

The Extracellular segment spans residues 1 to 67 (MGAQVRLPPG…ISANVENKYS (67 aa)). Asn-25, Asn-35, Asn-50, and Asn-55 each carry an N-linked (GlcNAc...) asparagine glycan. A helical transmembrane segment spans residues 68–88 (LYVGLVLAVSSSIFIGSSFIL). Residues 89-114 (KKKGLLQLASKGFTRAGQGGHSYLKE) lie on the Cytoplasmic side of the membrane. Residues 115 to 135 (WLWWVGLLSMGAGEAANFAAY) traverse the membrane as a helical segment. Position 136 (Ala-136) is a topological domain, extracellular. Residues 137–157 (FAPATLVTPLGALSVLISAIL) form a helical membrane-spanning segment. The Cytoplasmic segment spans residues 158–165 (SSYFLNEH). A helical membrane pass occupies residues 166-186 (LNIHGKIGCILSILGSTVMVI). Residues 187–207 (HAPQEEEVTSLHEMEMKLRDP) lie on the Extracellular side of the membrane. The helical transmembrane segment at 208–228 (GFISFAVIITVISLVLILIVA) threads the bilayer. Residues 229–233 (PKKGQ) lie on the Cytoplasmic side of the membrane. The helical transmembrane segment at 234-254 (TNILVYISICSLIGAFSVSSV) threads the bilayer. Over 255–273 (KGLGIAIKELIEWKPVYKH) the chain is Extracellular. Residues 274–294 (PLVFVLLAVLVLSVTTQINYL) form a helical membrane-spanning segment. Over 295-305 (NKALDTFNTSL) the chain is Cytoplasmic. The chain crosses the membrane as a helical span at residues 306–326 (VTPIYYVFFTSMVVTCSAILF). At 327 to 336 (QEWYGMTAGD) the chain is on the extracellular side. Residues 337-357 (IIGTLSGFFTIIIGIFLLHAF) form a helical membrane-spanning segment. Over 358-410 (KNTDITWSELTSTAKKEAVSLNVNENNYVLLENLECSAPGYNDDVTLFSRTDD) the chain is Cytoplasmic.

It belongs to the NIPA family. As to expression, expressed in the pancreatic islets.

It localises to the golgi apparatus membrane. The enzyme catalyses Mg(2+)(in) = Mg(2+)(out). In terms of biological role, acts as a Mg(2+) transporter. Can also transport other divalent cations such as Fe(2+), Sr(2+), Ba(2+), Mn(2+), Cu(2+) and Co(2+) but to a much less extent than Mg(2+). The polypeptide is Magnesium transporter NIPA3 (NIPAL1) (Homo sapiens (Human)).